The chain runs to 696 residues: Junctophilin-2 (696 aa).

The Cytoplasmic segment spans residues 1–674 (MSGGRFDFDD…EVEVEEVPNT (674 aa)). MORN repeat units lie at residues 14–36 (YCGGWEGGKAHGHGLCTGPKGQG), 38–59 (YSGSWNFGFEVAGVYTWPSGNT), 60–79 (FEGYWSQGKRHGLGIETKGR), 82–104 (YKGEWTHGFKGRYGIRQSTNSGA), 106–128 (YEGTWNNGLQDGYGTETYADGGT), and 129–151 (YQGQFTNGMRHGYGVRQSVPYGM). Residues Ser162 and Ser165 each carry the phosphoserine modification. Disordered regions lie at residues 164–192 (SSLRSEHSNGTVAPDSPAADGPMLPSPPV) and 246–273 (LSSGASDAASTGSLAEGAEGPDDAAAPF). MORN repeat units lie at residues 285–307 (YMGEWKNDKRSGFGVSERSSGLR) and 308–330 (YEGEWLDNLRHGYGRTTLPDGHR). The Bipartite nuclear localization signal signature appears at 345–359 (KRRVLPLKSSKVRQK). The tract at residues 439 to 664 (NSESLLEPPE…RKEVAQAKEA (226 aa)) is disordered. Phosphoserine occurs at positions 440, 442, and 462. Residues 457–471 (ERPRESPQLHERETP) show a composition bias toward basic and acidic residues. Residue Thr470 is modified to Phosphothreonine. Positions 474 to 487 (EGGPPSPAGTPPQP) are enriched in pro residues. Ser479 carries the post-translational modification Phosphoserine. Thr483 carries the phosphothreonine modification. The short motif at 488–492 (KRPRP) is the Nuclear localization signal element. Phosphoserine is present on residues Ser527 and Ser533. Residues 573 to 585 (PLEDEQEPEPEPE) show a composition bias toward acidic residues. Phosphoserine occurs at positions 593, 597, and 613. The segment covering 631-644 (AEPKAKARKTEARG) has biased composition (basic and acidic residues). The helical; Anchor for type IV membrane protein transmembrane segment at 675–695 (VLICMVILLNIGLAILFVHLL) threads the bilayer.

The protein belongs to the junctophilin family. In terms of assembly, interacts with TRPC3. Interacts with BAG5 and HSPA8; the interaction with HSPA8 is increased in the presence of BAG5. Interacts with MEF2C. Post-translationally, proteolytically cleaved by calpain in response to cardiac stress. The major cleavage site takes place at the C-terminus and leads to the release of the Junctophilin-2 N-terminal fragment chain (JP2NT). Phosphorylation on Ser-165, probably by PKC, affects RYR1-mediated calcium ion release, interaction with TRPC3, and skeletal muscle myotubule development. As to expression, abundantly expressed in skeletal muscle and heart. Weak expression in stomach and lung.

The protein localises to the cell membrane. Its subcellular location is the sarcoplasmic reticulum membrane. The protein resides in the endoplasmic reticulum membrane. It localises to the nucleus. Its function is as follows. Membrane-binding protein that provides a structural bridge between the plasma membrane and the sarcoplasmic reticulum and is required for normal excitation-contraction coupling in cardiomyocytes. Provides a structural foundation for functional cross-talk between the cell surface and intracellular Ca(2+) release channels by maintaining the 12-15 nm gap between the sarcolemma and the sarcoplasmic reticulum membranes in the cardiac dyads. Necessary for proper intracellular Ca(2+) signaling in cardiac myocytes via its involvement in ryanodine receptor-mediated calcium ion release. Contributes to the construction of skeletal muscle triad junctions. Functionally, transcription repressor required to safeguard against the deleterious effects of cardiac stress. Generated following cleavage of the Junctophilin-2 chain by calpain in response to cardiac stress in cardiomyocytes. Following cleavage and release from the membrane, translocates to the nucleus, binds DNA and represses expression of genes implicated in cell growth and differentiation, hypertrophy, inflammation and fibrosis. Modifies the transcription profile and thereby attenuates pathological remodeling in response to cardiac stress. Probably acts by competing with MEF2 transcription factors and TATA-binding proteins. The chain is Junctophilin-2 from Mus musculus (Mouse).